The primary structure comprises 365 residues: 2-aminoethylphosphonate--pyruvate transaminase (365 aa).

The residue at position 194 (K194) is an N6-(pyridoxal phosphate)lysine.

It belongs to the class-V pyridoxal-phosphate-dependent aminotransferase family. PhnW subfamily. In terms of assembly, homodimer. Pyridoxal 5'-phosphate is required as a cofactor.

It carries out the reaction (2-aminoethyl)phosphonate + pyruvate = phosphonoacetaldehyde + L-alanine. Involved in phosphonate degradation. This chain is 2-aminoethylphosphonate--pyruvate transaminase, found in Bacillus cereus (strain ATCC 10987 / NRS 248).